Here is a 138-residue protein sequence, read N- to C-terminus: MRSSTILFVLGVAMVAVNGVTTALISDGTGKGTQGKHRLLRSNSGKHKTDEERLKLSARIYGTKAYKKRQVRNRESARKFQKALLNMADGNDIARLLKKRNTTLKGLFALLARNKAGLPKEAKNHITTVYNTRRGGVL.

The N-terminal stretch at 1–19 (MRSSTILFVLGVAMVAVNG) is a signal peptide. Residues 38–53 (RLLRSNSGKHKTDEER) carry the RxLR-dEER motif. An N-linked (GlcNAc...) asparagine glycan is attached at asparagine 101.

Belongs to the RxLR effector family.

It localises to the secreted. It is found in the host nucleus. Its function is as follows. Secreted effector that completely suppresses the host cell death induced by cell death-inducing proteins. The sequence is that of Secreted RxLR effector protein 51 from Plasmopara viticola (Downy mildew of grapevine).